Reading from the N-terminus, the 160-residue chain is UPF0262 protein Mrad2831_3513 (160 aa).

The protein belongs to the UPF0262 family.

The chain is UPF0262 protein Mrad2831_3513 from Methylobacterium radiotolerans (strain ATCC 27329 / DSM 1819 / JCM 2831 / NBRC 15690 / NCIMB 10815 / 0-1).